The sequence spans 89 residues: Small ribosomal subunit protein uS15 (89 aa).

The protein belongs to the universal ribosomal protein uS15 family. As to quaternary structure, part of the 30S ribosomal subunit. Forms a bridge to the 50S subunit in the 70S ribosome, contacting the 23S rRNA.

Its function is as follows. One of the primary rRNA binding proteins, it binds directly to 16S rRNA where it helps nucleate assembly of the platform of the 30S subunit by binding and bridging several RNA helices of the 16S rRNA. Forms an intersubunit bridge (bridge B4) with the 23S rRNA of the 50S subunit in the ribosome. The chain is Small ribosomal subunit protein uS15 from Salmonella schwarzengrund (strain CVM19633).